We begin with the raw amino-acid sequence, 414 residues long: Transcriptional repressor protein YY1 (414 aa).

The segment at 1–170 (MASGDTLYIA…SGGGASSGGG (170 aa)) is interaction with the SMAD1/SMAD4 complex. Residues 32-41 (PVETIETTVV) are compositionally biased toward low complexity. Positions 32-83 (PVETIETTVVGEEEEEDDDDEDGGGGDHGGGGGGHGHAGHHHHHHHHHHHHP) are disordered. Residues 42–55 (GEEEEEDDDDEDGG) show a composition bias toward acidic residues. Gly residues predominate over residues 57 to 67 (GDHGGGGGGHG). Residues 68 to 83 (HAGHHHHHHHHHHHHP) are compositionally biased toward basic residues. The tract at residues 118-260 (DDSDGLRAED…YSEYMTGKKL (143 aa)) is gly-rich region involved in interaction with HCFC1. S120 bears the Phosphoserine mark. The disordered stretch occupies residues 159-203 (GKSGGGASSGGGRVKKGGGKKSGKKSYLGGGAGAAGGGGADPGNK). Positions 160–170 (KSGGGASSGGG) are enriched in gly residues. Over residues 171–182 (RVKKGGGKKSGK) the composition is skewed to basic residues. Residues K182 and K183 each participate in a glycyl lysine isopeptide (Lys-Gly) (interchain with G-Cter in SUMO2) cross-link. Residues 186–199 (LGGGAGAAGGGGAD) show a composition bias toward gly residues. Residues K208 and K230 each participate in a glycyl lysine isopeptide (Lys-Gly) (interchain with G-Cter in SUMO2) cross-link. S247 is subject to Phosphoserine. Residues 257–341 (GKKLPPGGIP…KAFVESSKLK (85 aa)) form an involved in nuclear matrix association region. Residues K286 and K288 each participate in a glycyl lysine isopeptide (Lys-Gly) (interchain with G-Cter in SUMO2) cross-link. The segment at 295–414 (TIACPHKGCT…LTHAKAKNNQ (120 aa)) is binding to DNA. C2H2-type zinc fingers lie at residues 296–320 (IACP…LHTH), 325–347 (HVCA…QLVH), and 353–377 (FQCT…VRIH). Residues C298, C303, H316, H320, C327, C330, H343, H347, C355, C360, H373, and H377 each contribute to the Zn(2+) site. An involved in repression of activated transcription region spans residues 333-371 (AFVESSKLKRHQLVHTGEKPFQCTFEGCGKRFSLDFNLR). Positions 371–397 (RTHVRIHTGDRPYVCPFDGCNKKFAQS) are involved in masking transactivation domain. T378 carries the phosphothreonine modification. The C2H2-type 4 zinc-finger motif lies at 383–407 (YVCPFDGCNKKFAQSTNLKSHILTH). The Zn(2+) site is built by C385, C390, H403, and H407. Glycyl lysine isopeptide (Lys-Gly) (interchain with G-Cter in SUMO2) cross-links involve residues K409 and K411.

The protein belongs to the YY transcription factor family. In terms of assembly, interacts with YAF2 through the region encompassing the first and second zinc fingers. Component of the chromatin remodeling INO80 complex; specifically part of a complex module associated with the DBINO domain of INO80. Interacts with EED and EZH2; the interactions are indicative for an association with the PRC2/EED-EZH2 complex. Found in a complex with SMAD1 and SMAD4. Interacts with SFMBT2. Found in a complex with YY1, SIN3A and HDAC1. Accessory component of the polycomb repressive deubiquitinase (PR-DUB) complex, at least composed of BAP1, one of ASXL1, ASXL2 or (probably) ASXL3 and one of MBD5 or MBD6; the PR-DUB core associates with a number of accessory proteins, including FOXK1, FOXK2, KDM1B, HCFC1, YY1 and OGT. Interacts (via Gly-rich region) with HCFC1; the interaction is direct. Interacts (via C-terminal zinc-finger domains) with BAP1 (via ULD domain); the interaction is direct and requires HCFC1. Post-translationally, transiently poly-ADP-ribosylated by PARP1 upon DNA damage, with the effect of decreasing affinity of YY1 to its cognate DNA binding sites. In terms of processing, ubiquitinated. Phosphorylation at Ser-120 by CK2 prevents proteolytic cleavage by caspase-7 (CASP7) during apoptosis. Post-translationally, proteolytically cleaved by caspase-7 (CASP7) in response to apoptosis. Phosphorylation at Ser-120 protects against proteolytic cleavage. In terms of tissue distribution, expressed in ovary and, at lower levels, in testis.

It is found in the nucleus. The protein resides in the nucleus matrix. The protein localises to the cytoplasm. Multifunctional transcription factor that exhibits positive and negative control on a large number of cellular and viral genes by binding to sites overlapping the transcription start site. Binds to the consensus sequence 5'-CCGCCATNTT-3'; some genes have been shown to contain a longer binding motif allowing enhanced binding; the initial CG dinucleotide can be methylated greatly reducing the binding affinity. The effect on transcription regulation is depending upon the context in which it binds and diverse mechanisms of action include direct activation or repression, indirect activation or repression via cofactor recruitment, or activation or repression by disruption of binding sites or conformational DNA changes. Its activity is regulated by transcription factors and cytoplasmic proteins that have been shown to abrogate or completely inhibit YY1-mediated activation or repression. Binds to the upstream conserved region (UCR) (5'-CGCCATTTT-3') of Moloney murine leukemia virus (MuLV). Acts synergistically with the SMAD1 and SMAD4 in bone morphogenetic protein (BMP)-mediated cardiac-specific gene expression. Binds to SMAD binding elements (SBEs) (5'-GTCT/AGAC-3') within BMP response element (BMPRE) of cardiac activating regions. Proposed to recruit the PRC2/EED-EZH2 complex to target genes that are transcriptional repressed. Involved in DNA repair. In vitro, binds to DNA recombination intermediate structures (Holliday junctions). Involved in spermatogenesis and may play a role in meiotic DNA double-strand break repair. Plays a role in regulating enhancer activation. Recruits the PR-DUB complex to specific gene-regulatory regions. Its function is as follows. Proposed core component of the chromatin remodeling INO80 complex which is involved in transcriptional regulation, DNA replication and probably DNA repair; proposed to target the INO80 complex to YY1-responsive elements. This is Transcriptional repressor protein YY1 (Yy1) from Mus musculus (Mouse).